The sequence spans 533 residues: Fimbrial subunit type 1 (533 aa).

The signal sequence occupies residues 1–30 (MHSLNTRRGLGLAAAMTLAAGALVAPTGAA). Residues 496–500 (LPLTG) carry the LPXTG sorting signal motif. The residue at position 499 (threonine 499) is a Pentaglycyl murein peptidoglycan amidated threonine. A propeptide spans 500–533 (GANGVIFLTIAGALLVAGGAVVAYANKRRHVAKH) (removed by sortase).

It is found in the secreted. The protein resides in the cell wall. Its subcellular location is the fimbrium. Its function is as follows. Major fimbrial subunit of A.viscosus. The sequence is that of Fimbrial subunit type 1 from Actinomyces viscosus.